Reading from the N-terminus, the 492-residue chain is Cholesteryl ester transfer protein (492 aa).

The signal sequence occupies residues 1–17 (MLAVTLLSLALLGSTCA). Cys-160 and Cys-201 are oxidised to a cystine. N-linked (GlcNAc...) asparagine glycosylation occurs at Asn-257.

The protein belongs to the BPI/LBP/Plunc superfamily. BPI/LBP family.

It is found in the secreted. It catalyses the reaction cholesteryl (9Z-octadecenoate)(in) = cholesteryl (9Z-octadecenoate)(out). The enzyme catalyses 1,2,3-tri-(9Z-octadecenoyl)-glycerol(in) = 1,2,3-tri-(9Z-octadecenoyl)-glycerol(out). The catalysed reaction is cholesteryl (9Z,12Z)-octadecadienoate(in) = cholesteryl (9Z,12Z)-octadecadienoate(out). In terms of biological role, involved in the transfer of neutral lipids, including cholesteryl ester and triglyceride, among lipoprotein particles. Allows the net movement of cholesteryl ester from high density lipoproteins/HDL to triglyceride-rich very low density lipoproteins/VLDL, and the equimolar transport of triglyceride from VLDL to HDL. Regulates the reverse cholesterol transport, by which excess cholesterol is removed from peripheral tissues and returned to the liver for elimination. In Cricetulus griseus (Chinese hamster), this protein is Cholesteryl ester transfer protein.